A 491-amino-acid chain; its full sequence is Probable cytosol aminopeptidase (491 aa).

Mn(2+) is bound by residues Lys-261 and Asp-266. Lys-273 is an active-site residue. Positions 285, 344, and 346 each coordinate Mn(2+). Arg-348 is an active-site residue.

It belongs to the peptidase M17 family. Mn(2+) serves as cofactor.

It is found in the cytoplasm. The enzyme catalyses Release of an N-terminal amino acid, Xaa-|-Yaa-, in which Xaa is preferably Leu, but may be other amino acids including Pro although not Arg or Lys, and Yaa may be Pro. Amino acid amides and methyl esters are also readily hydrolyzed, but rates on arylamides are exceedingly low.. It carries out the reaction Release of an N-terminal amino acid, preferentially leucine, but not glutamic or aspartic acids.. Functionally, presumably involved in the processing and regular turnover of intracellular proteins. Catalyzes the removal of unsubstituted N-terminal amino acids from various peptides. The protein is Probable cytosol aminopeptidase of Picosynechococcus sp. (strain ATCC 27264 / PCC 7002 / PR-6) (Agmenellum quadruplicatum).